Consider the following 93-residue polypeptide: Alpha-defensin 10 (93 aa).

Positions 1-19 (MKTLVLLSALVLLAFQVQA) are cleaved as a signal peptide. Positions 20 to 58 (DPIQNTDEETKTEEQPGEDDQAVSVSFGDPEGSSLQEES) are excised as a propeptide. The interval 22-56 (IQNTDEETKTEEQPGEDDQAVSVSFGDPEGSSLQE) is disordered. Disulfide bonds link C64-C92, C66-C81, and C71-C91.

It belongs to the alpha-defensin family. As to expression, paneth cells of the small bowel.

The protein resides in the secreted. In terms of biological role, probably contributes to the antimicrobial barrier function of the small bowel mucosa. This chain is Alpha-defensin 10 (Defa10), found in Mus musculus (Mouse).